Here is a 231-residue protein sequence, read N- to C-terminus: Ion-translocating oxidoreductase complex subunit E (231 aa).

6 consecutive transmembrane segments (helical) span residues 18-38 (GLVQ…VTNA), 39-59 (LGLG…VSLV), 69-89 (IPVF…LINA), 93-113 (GLYL…VIIG), 128-148 (AFDG…LGAG), and 182-202 (PFLL…LIAG).

It belongs to the NqrDE/RnfAE family. As to quaternary structure, the complex is composed of six subunits: RnfA, RnfB, RnfC, RnfD, RnfE and RnfG.

It is found in the cell inner membrane. Functionally, part of a membrane-bound complex that couples electron transfer with translocation of ions across the membrane. The sequence is that of Ion-translocating oxidoreductase complex subunit E from Shewanella denitrificans (strain OS217 / ATCC BAA-1090 / DSM 15013).